The sequence spans 202 residues: U-Kazal-Dg21.2 (202 aa).

The N-terminal stretch at 1 to 20 (MKYFLWSAVTIFAIVNVVGA) is a signal peptide. Residues 21 to 87 (KNSDFDPRCL…SFCQVEEDFD (67 aa)) constitute a propeptide that is removed on maturation. Kazal-like domains follow at residues 23-77 (SDFD…KTLM), 85-140 (DFDS…ICRN), and 148-202 (IDPK…KGEC). 5 disulfide bridges follow: cysteine 29–cysteine 62, cysteine 33–cysteine 55, cysteine 91–cysteine 124, cysteine 95–cysteine 117, and cysteine 103–cysteine 138. Residue asparagine 140 is glycosylated (N-linked (GlcNAc...) asparagine). The propeptide occupies 142 to 202 (SFKSELIDPK…NWTLIRKGEC (61 aa)). 3 cysteine pairs are disulfide-bonded: cysteine 154–cysteine 187, cysteine 158–cysteine 180, and cysteine 166–cysteine 202. N-linked (GlcNAc...) asparagine glycosylation occurs at asparagine 193.

Expressed by the venom gland.

It is found in the secreted. May act as a serine protease inhibitor, since it possess the kazal serine protease inhibitor signature. The recombinant peptide does not produce toxic effects on insects. The chain is U-Kazal-Dg21.2 from Dolopus genitalis (Giant Australian assassin fly).